The following is a 364-amino-acid chain: Fructose-bisphosphate aldolase B (364 aa).

N-acetylalanine is present on Ala2. The residue at position 13 (Lys13) is an N6-succinyllysine. Phosphoserine is present on Ser36. At Thr39 the chain carries Phosphothreonine. Arg43 is a beta-D-fructose 1,6-bisphosphate binding site. Ser89 bears the Phosphoserine mark. Residue Thr119 is modified to Phosphothreonine. Lys121 is subject to N6-succinyllysine. A Phosphoserine modification is found at Ser132. Glu188 (proton acceptor) is an active-site residue. The Schiff-base intermediate with dihydroxyacetone-P role is filled by Lys230. Residues Ser272, Ser276, Ser299, and Ser301 each carry the phosphoserine modification. 272 to 274 (SGG) is a beta-D-fructose 1,6-bisphosphate binding site. Arg304 contributes to the beta-D-fructose 1,6-bisphosphate binding site. Ser309 is subject to Phosphoserine. Residue Lys317 is modified to N6-succinyllysine.

The protein belongs to the class I fructose-bisphosphate aldolase family. In terms of assembly, homotetramer. Interacts with BBS1, BBS2, BBS4 and BBS7. Forms a ternary complex with G6PD and TP53; this interaction is direct.

It localises to the cytoplasm. Its subcellular location is the cytosol. It is found in the cytoskeleton. The protein resides in the microtubule organizing center. The protein localises to the centrosome. It localises to the centriolar satellite. The catalysed reaction is beta-D-fructose 1,6-bisphosphate = D-glyceraldehyde 3-phosphate + dihydroxyacetone phosphate. It carries out the reaction beta-D-fructose 1-phosphate = D-glyceraldehyde + dihydroxyacetone phosphate. It participates in carbohydrate degradation; glycolysis; D-glyceraldehyde 3-phosphate and glycerone phosphate from D-glucose: step 4/4. Its pathway is carbohydrate biosynthesis; gluconeogenesis. The protein operates within carbohydrate metabolism; fructose metabolism. Functionally, catalyzes the aldol cleavage of fructose 1,6-biphosphate to form two triosephosphates dihydroxyacetone phosphate and D-glyceraldehyde 3-phosphate in glycolysis as well as the reverse stereospecific aldol addition reaction in gluconeogenesis. In fructolysis, metabolizes fructose 1-phosphate derived from the phosphorylation of dietary fructose by fructokinase into dihydroxyacetone phosphate and D-glyceraldehyde. Acts as an adapter independently of its enzymatic activity, exerts a tumor suppressor role by stabilizing the ternary complex with G6PD and TP53 to inhibit G6PD activity and keep oxidative pentose phosphate metabolism in check. In Homo sapiens (Human), this protein is Fructose-bisphosphate aldolase B.